The primary structure comprises 309 residues: Protein MAK16 homolog (309 aa).

The disordered stretch occupies residues 194 to 309 (EADQFSEEEA…IEEETENQAN (116 aa)). Composition is skewed to acidic residues over residues 195-227 (ADQFSEEEADENEEEGEEEMEEEFEDDIDDIED) and 235-270 (VEGDDDEDDIDDEYENEPYQDDDEEDDDDDDDDDEE). Residues 275–293 (ITKKRGPTFKPTKKTPQKR) are compositionally biased toward basic residues. The span at 299–309 (EIEEETENQAN) shows a compositional bias: acidic residues.

It belongs to the MAK16 family.

The protein localises to the nucleus. It is found in the nucleolus. This is Protein MAK16 homolog (mak16l) from Dictyostelium discoideum (Social amoeba).